We begin with the raw amino-acid sequence, 184 residues long: Thiosulfate dehydrogenase [quinone] large subunit (184 aa).

The next 4 membrane-spanning stretches (helical) occupy residues 21–38 (LFPVRFAVGWMFLDGGLR), 86–106 (FLTVFSYIEIIAGLFIIIGLL), 109–129 (LAALGALAMSVGFAPAYWLGS), and 137–157 (IGALLTAGSVTLMLTAAGRVW).

Heterodimer of a large and a small subunit in a 2:2 stoichiometry. TQO may associate with the terminal oxidase formed by doxBCE.

It localises to the cell membrane. It catalyses the reaction 6-decylubiquinone + 2 thiosulfate = 6-decylubiquinol + tetrathionate. Its activity is regulated as follows. Inhibited by sulfite, metabisulfite and dithonite. TQO plays a role in sulfur oxidation and is proposed to couple sulfur oxidation to dioxygen reduction; caldariellaquinone or sulfolobus quinone seem to serve to transfer electrons to the electron transport chain terminal oxidase formed by DoxBCE. This is Thiosulfate dehydrogenase [quinone] large subunit (doxD) from Acidianus ambivalens (Desulfurolobus ambivalens).